Consider the following 292-residue polypeptide: Feruloyl esterase B (292 aa).

The N-terminal stretch at 1 to 18 (MLPRTLLGLALTAATGLC) is a signal peptide. N-linked (GlcNAc...) asparagine glycosylation is found at Asn-88, Asn-117, Asn-179, and Asn-245.

This sequence belongs to the carbohydrate esterase 1 (CE1) family. Feruloyl esterase type B subfamily.

Its subcellular location is the secreted. The enzyme catalyses feruloyl-polysaccharide + H2O = ferulate + polysaccharide.. Its function is as follows. Involved in degradation of plant cell walls. Hydrolyzes of the feruloyl-arabinose ester bond in arabinoxylans as well as the feruloyl-galactose and feruloyl-arabinose ester bonds in pectin. The sequence is that of Feruloyl esterase B (fae-1) from Neurospora crassa (strain ATCC 24698 / 74-OR23-1A / CBS 708.71 / DSM 1257 / FGSC 987).